Here is a 228-residue protein sequence, read N- to C-terminus: Urease accessory protein UreF 1 (228 aa).

It belongs to the UreF family. In terms of assembly, ureD, UreF and UreG form a complex that acts as a GTP-hydrolysis-dependent molecular chaperone, activating the urease apoprotein by helping to assemble the nickel containing metallocenter of UreC. The UreE protein probably delivers the nickel.

The protein resides in the cytoplasm. In terms of biological role, required for maturation of urease via the functional incorporation of the urease nickel metallocenter. Functionally, disruption of the ure1 gene cluster suggests that it protects brucellae during their passage through the stomach. The major route of infection in human brucellosis is oral. The protein is Urease accessory protein UreF 1 of Brucella abortus (strain 2308).